Here is a 67-residue protein sequence, read N- to C-terminus: DNA-directed RNA polymerase subunit omega (67 aa).

Belongs to the RNA polymerase subunit omega family. In terms of assembly, the RNAP catalytic core consists of 2 alpha, 1 beta, 1 beta' and 1 omega subunit. When a sigma factor is associated with the core the holoenzyme is formed, which can initiate transcription.

It carries out the reaction RNA(n) + a ribonucleoside 5'-triphosphate = RNA(n+1) + diphosphate. Functionally, promotes RNA polymerase assembly. Latches the N- and C-terminal regions of the beta' subunit thereby facilitating its interaction with the beta and alpha subunits. This chain is DNA-directed RNA polymerase subunit omega, found in Delftia acidovorans (strain DSM 14801 / SPH-1).